We begin with the raw amino-acid sequence, 234 residues long: S-adenosylmethionine synthase 1 (234 aa).

Residues 10–12 (DGK), 78–81 (SGRF), D89, 95–96 (RK), A112, K116, and K120 contribute to the ATP site. D89 serves as a coordination point for L-methionine. K120 provides a ligand contact to L-methionine.

The protein belongs to the AdoMet synthase family. As to quaternary structure, homotetramer. The cofactor is Mn(2+). It depends on Mg(2+) as a cofactor. Requires Co(2+) as cofactor. K(+) is required as a cofactor. Mainly in floral buds and roots.

It localises to the cytoplasm. It carries out the reaction L-methionine + ATP + H2O = S-adenosyl-L-methionine + phosphate + diphosphate. It participates in amino-acid biosynthesis; S-adenosyl-L-methionine biosynthesis; S-adenosyl-L-methionine from L-methionine: step 1/1. Its function is as follows. Catalyzes the formation of S-adenosylmethionine from methionine and ATP. The reaction comprises two steps that are both catalyzed by the same enzyme: formation of S-adenosylmethionine (AdoMet) and triphosphate, and subsequent hydrolysis of the triphosphate. In Petroselinum crispum (Parsley), this protein is S-adenosylmethionine synthase 1 (SMS-1).